Consider the following 126-residue polypeptide: Pancreatic polypeptide prohormone (126 aa).

The N-terminal stretch at 1–26 is a signal peptide; it reads MTATRCCLWLLLLGTCMALLLPEAWG. A Tyrosine amide modification is found at Tyr-62. A disordered region spans residues 77-126; that stretch reads RQSHAAAPGGSHRHPPAGLPAAKGGTGVSGSPPKPWDCLPCRAHSLPSQS.

The protein belongs to the NPY family. In terms of processing, no icosapeptide-like peptide is cleaved from the C-terminal.

It localises to the secreted. Its function is as follows. Hormone secreted by pancreatic cells that acts as a regulator of pancreatic and gastrointestinal functions probably by signaling through the G protein-coupled receptor NPY4R2. The sequence is that of Pancreatic polypeptide prohormone (PPY) from Cavia porcellus (Guinea pig).